A 902-amino-acid polypeptide reads, in one-letter code: Probable leucine--tRNA ligase, mitochondrial (902 aa).

Position 67 is an N6-acetyllysine (K67). Residues 91-101 (YPSGKLHMGHV) carry the 'HIGH' region motif. Residue K235 is modified to N6-acetyllysine. Positions 638–642 (KMSKS) match the 'KMSKS' region motif. K641 serves as a coordination point for ATP.

It belongs to the class-I aminoacyl-tRNA synthetase family.

It is found in the mitochondrion matrix. The catalysed reaction is tRNA(Leu) + L-leucine + ATP = L-leucyl-tRNA(Leu) + AMP + diphosphate. The protein is Probable leucine--tRNA ligase, mitochondrial (Lars2) of Mus musculus (Mouse).